The chain runs to 168 residues: S-ribosylhomocysteine lyase (168 aa).

Residues H54, H58, and C128 each coordinate Fe cation.

It belongs to the LuxS family. As to quaternary structure, homodimer. Fe cation serves as cofactor.

It carries out the reaction S-(5-deoxy-D-ribos-5-yl)-L-homocysteine = (S)-4,5-dihydroxypentane-2,3-dione + L-homocysteine. Its function is as follows. Involved in the synthesis of autoinducer 2 (AI-2) which is secreted by bacteria and is used to communicate both the cell density and the metabolic potential of the environment. The regulation of gene expression in response to changes in cell density is called quorum sensing. Catalyzes the transformation of S-ribosylhomocysteine (RHC) to homocysteine (HC) and 4,5-dihydroxy-2,3-pentadione (DPD). The protein is S-ribosylhomocysteine lyase of Neisseria meningitidis serogroup C / serotype 2a (strain ATCC 700532 / DSM 15464 / FAM18).